The primary structure comprises 69 residues: Defensin-like protein 166 (69 aa).

The signal sequence occupies residues 1 to 15 (MIIVIIFLVIYFNNQ). Cystine bridges form between C19–C68, C24–C44, C29–C62, and C33–C64.

The protein belongs to the DEFL family.

Its subcellular location is the secreted. The sequence is that of Defensin-like protein 166 from Arabidopsis thaliana (Mouse-ear cress).